Here is a 1187-residue protein sequence, read N- to C-terminus: Probable histidine kinase 5 (1187 aa).

Residues 1–175 are Extracellular-facing; that stretch reads MSRVGECGGG…QNNALSFNHG (175 aa). Residues 176-196 traverse the membrane as a helical segment; the sequence is MIFSLSASLGIVVILVVITIF. Topologically, residues 197–226 are cytoplasmic; sequence KRGKQANELCQHEKLLQTPSVKISRKWSKR. Residues 227 to 247 form a helical membrane-spanning segment; that stretch reads ALLLGVLVGLCSSVWIFSSMH. Over 248–531 the chain is Extracellular; it reads ADVVARRIEN…FKHAPSLPWS (284 aa). Positions 295–519 constitute a CHASE domain; the sequence is NPSAIDQKTF…GDPTRKHVMH (225 aa). Residues 532–552 form a helical membrane-spanning segment; sequence AIMISSAVAIIVLLVGYIIYA. Residues 553 to 1187 are Cytoplasmic-facing; that stretch reads TLNSLEEAED…LEADATDPLT (635 aa). One can recognise a Histidine kinase domain in the interval 587–862; the sequence is TVSHEIRTPM…TFSFTAIFKE (276 aa). H590 carries the phosphohistidine; by autocatalysis modification. Response regulatory domains lie at 886 to 1017 and 1041 to 1178; these read RALV…SKAL and NILV…AHFL. 2 positions are modified to 4-aspartylphosphate: D942 and D1091.

In terms of processing, activation probably requires a transfer of a phosphate group between a His in the transmitter domain and an Asp of the receiver domain. As to expression, highly expressed in young leaves and at lower levels in roots, mature leaves, stems and spikelets.

It is found in the cell membrane. The catalysed reaction is ATP + protein L-histidine = ADP + protein N-phospho-L-histidine.. Functionally, cytokinin receptor related to bacterial two-component regulators. Functions as a histidine kinase and transmits the stress signal to a downstream MAPK cascade. The polypeptide is Probable histidine kinase 5 (Oryza sativa subsp. japonica (Rice)).